The following is a 226-amino-acid chain: Protein DVU_0532 (226 aa).

Helical transmembrane passes span 1–23 (MYAFLTGPMLWASLLVFFGGLLA), 46–57 (AIGLQGAVQSAL), 73–99 (FFTVAFFLFHIGAVLVPLFLAGHNVIL), 112–131 (MGVADTLTVLAIIGLVMIAL), 141–164 (ILTTGYDWFILAVSAAPFVTGFLA), and 194–222 (LSHIVLFFMSRGQLGMDYAIKRGGATRGP).

Requires heme b as cofactor.

Its subcellular location is the cell membrane. HMWC (high-molecular-weight cytochrome c), ORF2, ORF3, ORF4, ORF5 and ORF6 in the HMC operon form a transmembrane protein complex that allows electron flow from the periplasmic hydrogenase to the cytoplasmic enzymes that catalyze reduction of sulfates. This is Protein DVU_0532 from Nitratidesulfovibrio vulgaris (strain ATCC 29579 / DSM 644 / CCUG 34227 / NCIMB 8303 / VKM B-1760 / Hildenborough) (Desulfovibrio vulgaris).